A 360-amino-acid polypeptide reads, in one-letter code: Phospho-N-acetylmuramoyl-pentapeptide-transferase (360 aa).

10 helical membrane passes run 21 to 41 (YLSFRAIVSILTALGISLWMG), 73 to 93 (TMGGVMILAAITITVLLWADL), 94 to 114 (TNPYVWAVLAVLLGYGAVGFV), 132 to 152 (WKYFWQSAIALVVAFALYAHG), 168 to 188 (VMPQLGLMYIVLTYFVIVGTS), 199 to 219 (GLAIMPTVLVAAGFAAIAWAT), 239 to 259 (LVVVCTAMVGAGLGFLWFNTY), 263 to 283 (VFMGDVGALALGGALGTIAVL), 288 to 308 (FVLVIMGGVFVMETLSVILQV), and 338 to 358 (VIVRFWVISIVLVLIGLATLK).

It belongs to the glycosyltransferase 4 family. MraY subfamily. Mg(2+) serves as cofactor.

Its subcellular location is the cell inner membrane. It carries out the reaction UDP-N-acetyl-alpha-D-muramoyl-L-alanyl-gamma-D-glutamyl-meso-2,6-diaminopimeloyl-D-alanyl-D-alanine + di-trans,octa-cis-undecaprenyl phosphate = di-trans,octa-cis-undecaprenyl diphospho-N-acetyl-alpha-D-muramoyl-L-alanyl-D-glutamyl-meso-2,6-diaminopimeloyl-D-alanyl-D-alanine + UMP. It functions in the pathway cell wall biogenesis; peptidoglycan biosynthesis. Functionally, catalyzes the initial step of the lipid cycle reactions in the biosynthesis of the cell wall peptidoglycan: transfers peptidoglycan precursor phospho-MurNAc-pentapeptide from UDP-MurNAc-pentapeptide onto the lipid carrier undecaprenyl phosphate, yielding undecaprenyl-pyrophosphoryl-MurNAc-pentapeptide, known as lipid I. This Vibrio cholerae serotype O1 (strain ATCC 39541 / Classical Ogawa 395 / O395) protein is Phospho-N-acetylmuramoyl-pentapeptide-transferase.